We begin with the raw amino-acid sequence, 252 residues long: Phosphate import ATP-binding protein PstB 1 (252 aa).

In terms of domain architecture, ABC transporter spans 6–247 (LKVNDLSVYY…PQKQETEDYI (242 aa)). 38–45 (GPSGSGKS) provides a ligand contact to ATP.

It belongs to the ABC transporter superfamily. Phosphate importer (TC 3.A.1.7) family. As to quaternary structure, the complex is composed of two ATP-binding proteins (PstB), two transmembrane proteins (PstC and PstA) and a solute-binding protein (PstS).

It localises to the cell membrane. It catalyses the reaction phosphate(out) + ATP + H2O = ADP + 2 phosphate(in) + H(+). In terms of biological role, part of the ABC transporter complex PstSACB involved in phosphate import. Responsible for energy coupling to the transport system. The chain is Phosphate import ATP-binding protein PstB 1 from Streptococcus mutans serotype c (strain ATCC 700610 / UA159).